The following is a 476-amino-acid chain: Thymidine phosphorylase (476 aa).

Positions 1 to 11 are enriched in pro residues; the sequence is MAAPGTPPPLA. The segment at 1–26 is disordered; that stretch reads MAAPGTPPPLAPETAGADSGGGSGEH. Phosphothreonine occurs at positions 6 and 475.

It belongs to the thymidine/pyrimidine-nucleoside phosphorylase family. As to quaternary structure, homodimer.

It carries out the reaction thymidine + phosphate = 2-deoxy-alpha-D-ribose 1-phosphate + thymine. It functions in the pathway pyrimidine metabolism; dTMP biosynthesis via salvage pathway; dTMP from thymine: step 1/2. Functionally, catalyzes the reversible phosphorolysis of thymidine. The produced molecules are then utilized as carbon and energy sources or in the rescue of pyrimidine bases for nucleotide synthesis. The protein is Thymidine phosphorylase (Tymp) of Rattus norvegicus (Rat).